The sequence spans 116 residues: Ribosome-binding factor A (116 aa).

Belongs to the RbfA family. As to quaternary structure, monomer. Binds 30S ribosomal subunits, but not 50S ribosomal subunits or 70S ribosomes.

The protein resides in the cytoplasm. One of several proteins that assist in the late maturation steps of the functional core of the 30S ribosomal subunit. Associates with free 30S ribosomal subunits (but not with 30S subunits that are part of 70S ribosomes or polysomes). Required for efficient processing of 16S rRNA. May interact with the 5'-terminal helix region of 16S rRNA. The protein is Ribosome-binding factor A of Mycoplasma pneumoniae (strain ATCC 29342 / M129 / Subtype 1) (Mycoplasmoides pneumoniae).